We begin with the raw amino-acid sequence, 145 residues long: AP-2 complex subunit sigma (145 aa).

The protein belongs to the adaptor complexes small subunit family. Adaptor protein complex 2 (AP-2) is a heterotetramer composed of two large adaptins (alpha-type subunit apl3 and beta-type subunit apl1), a medium chain (mu-type subunit apm4) and a small adaptin (sigma-type subunit aps2).

It is found in the cell membrane. The protein localises to the membrane. The protein resides in the coated pit. Its function is as follows. Component of the adaptor complexes which link clathrin to receptors in coated vesicles. Clathrin-associated protein complexes are believed to interact with the cytoplasmic tails of membrane proteins, leading to their selection and concentration. The protein is AP-2 complex subunit sigma (aps2) of Aspergillus fumigatus (strain ATCC MYA-4609 / CBS 101355 / FGSC A1100 / Af293) (Neosartorya fumigata).